The following is a 505-amino-acid chain: Deoxyguanosinetriphosphate triphosphohydrolase (505 aa).

Positions 66-273 (RLTHSMEVQQ…MEAADDISYC (208 aa)) constitute an HD domain.

It belongs to the dGTPase family. Type 1 subfamily. In terms of assembly, homotetramer. Mg(2+) serves as cofactor.

It carries out the reaction dGTP + H2O = 2'-deoxyguanosine + triphosphate + H(+). In terms of biological role, dGTPase preferentially hydrolyzes dGTP over the other canonical NTPs. The chain is Deoxyguanosinetriphosphate triphosphohydrolase from Escherichia coli O7:K1 (strain IAI39 / ExPEC).